We begin with the raw amino-acid sequence, 127 residues long: Large ribosomal subunit protein bL20 (127 aa).

It belongs to the bacterial ribosomal protein bL20 family.

Functionally, binds directly to 23S ribosomal RNA and is necessary for the in vitro assembly process of the 50S ribosomal subunit. It is not involved in the protein synthesizing functions of that subunit. In Bifidobacterium longum (strain DJO10A), this protein is Large ribosomal subunit protein bL20.